We begin with the raw amino-acid sequence, 389 residues long: MVTVEDIRRAQRAEGPATVMAIGTATPPNCVDQSTYPDYYFRITNSEHKAELKEKFKRMCDKSMIKKRYMYLTEEILKENPQVCEYMAPSLDARQDMVVVEVPKLGKEAATKAIKEWGQPKSKITHLVFCTTSGVDMPGADYQLTKLLGLRPSVKRLMMYQQGCFAGGTVLRLAKDLAENNKGARVLVVCSEITAVTFRGPSDTHLDSLVGQALFGDGAAAIIVGSDPIPEVEKPLFELVSAAQTILPDSDGAIDGHLREVGLTFHLLKDVPGLISKNIEKSLAEAFQPLGISDWNSLFWIAHPGGPAILDQVELKLGLKEEKLRATRHVLSEYGNMSSACVLFILDEMRKKSAADGLKTTGEGLEWGVLFGFGPGLTVETVVLHSLST.

The active site involves Cys-164.

Belongs to the thiolase-like superfamily. Chalcone/stilbene synthases family.

It carries out the reaction (E)-4-coumaroyl-CoA + 3 malonyl-CoA + 3 H(+) = 2',4,4',6'-tetrahydroxychalcone + 3 CO2 + 4 CoA. Its pathway is secondary metabolite biosynthesis; flavonoid biosynthesis. Functionally, the primary product of this enzyme is 4,2',4',6'-tetrahydroxychalcone (also termed naringenin-chalcone or chalcone) which can under specific conditions spontaneously isomerize into naringenin. The protein is Chalcone synthase 1 (CHS1) of Camellia sinensis (Tea plant).